The following is a 199-amino-acid chain: Inner membrane protein E199L (199 aa).

N131 carries N-linked (GlcNAc...) asparagine; by host glycosylation. A helical membrane pass occupies residues 150–170; sequence INVMNHPFLTLILIILILIII.

Belongs to the asfivirus E199L family. In terms of assembly, interacts with host PYCR2; this interaction results in autophagy activation. Contains intramolecular disulfide bonds.

It is found in the virion membrane. The protein localises to the host membrane. Essential for viral fusion with host endosomal membrane and core release. Not required for virus morphogenesis and egress. Induces complete autophagy through the interaction with and down-regulation of host PYCR2. This African swine fever virus (isolate Tick/South Africa/Pretoriuskop Pr4/1996) (ASFV) protein is Inner membrane protein E199L.